The primary structure comprises 388 residues: Deoxyguanosinetriphosphate triphosphohydrolase-like protein (388 aa).

The segment at 24–44 (HSAQTRGRVHAEPPSTSRTEF) is disordered. An HD domain is found at 78–209 (RLTHSLEVAQ…ANLADEVAYN (132 aa)).

The protein belongs to the dGTPase family. Type 2 subfamily.

The sequence is that of Deoxyguanosinetriphosphate triphosphohydrolase-like protein from Ralstonia pickettii (strain 12J).